Reading from the N-terminus, the 626-residue chain is MSLISAVPLASSCVSKSLISSVREHTALRRAIATLQMSRRGKSVAASIRMSSATAGSDDGVKRRIGDYHSNLWDDNFIQSLSSPYGASSYGEHADRLIGEVKEIFNSFSIADGELISPVNDLLQQLWMVDNVERLGIDRHFQTEIKVALDYVYRYWSEEGIGCGRDSAFTDLNTTALAFRIFRLHGYTVSSDVFEHFKDQKGQFAASANDTELQTRSVFNLFRASLIAFPEEKVLEEAEKFAAAYLKAALQTLPVSGLSREIQYVFDYRWHSNLPRLEARSYIDILADNTISGTPDANTKKLLELAKLEFNIFHSVQQKELQCLWRWWKEWGCPELTFIRHRYVEFYTLVSGIDMVPEHATFRLSCVKTCHLITILDDMYDTFGTIDELRLFTAAVKRWDPSATECLPEYMKGVYMVLYETVNEMAKEAQKSQRRDTLGYVRQALEDYIGSYLKEAQWIATGYVPTFQEYFENGKLSSGHRIATLQPILTLSIPFPHHILQEIDFPSKFNDYAASILRLRGDTRCYKADSARGEEASCISCYMKDNPGSTQEDALNHINGMIEDMIKKLNWEFLRPDNNAPISSKKHAFNISRGLHHFYNYRDGYSVASKETKDLVIKTVLEPVLM.

Residues Met-1–Ala-45 constitute a chloroplast transit peptide. 3 residues coordinate Mg(2+): Asp-377, Asp-381, and Asp-529. Residues Asp-377–Asp-381 carry the DDXXD motif motif.

This sequence belongs to the terpene synthase family. Tpsd subfamily. Mg(2+) is required as a cofactor. Mn(2+) serves as cofactor.

The protein resides in the plastid. It localises to the chloroplast. The enzyme catalyses (2E)-geranyl diphosphate = (+)-car-3-ene + diphosphate. It catalyses the reaction (2E)-geranyl diphosphate = terpinolene + diphosphate. The protein operates within terpene metabolism; oleoresin biosynthesis. It functions in the pathway secondary metabolite biosynthesis; terpenoid biosynthesis. Functionally, monoterpene synthase (TPS) involved in the biosynthesis of monoterpene natural products included in conifer oleoresin secretions and volatile emissions; these compounds contribute to biotic and abiotic stress defense against herbivores and pathogens. Catalyzes the conversion of (2E)-geranyl diphosphate (GPP) to (+)-car-3-ene and, to a lower extent, to terpinolene. This Pinus contorta (Shore pine) protein is (+)-3-carene synthase 1, chloroplastic.